We begin with the raw amino-acid sequence, 87 residues long: Small ribosomal subunit protein bS20 (87 aa).

This sequence belongs to the bacterial ribosomal protein bS20 family.

Binds directly to 16S ribosomal RNA. In Clostridium perfringens (strain 13 / Type A), this protein is Small ribosomal subunit protein bS20.